The sequence spans 148 residues: SsrA-binding protein (148 aa).

The disordered stretch occupies residues 119 to 148; sequence AKGKKQHDKRETEKKRDWEREKARLMRSPG. Positions 126–142 are enriched in basic and acidic residues; the sequence is DKRETEKKRDWEREKAR.

Belongs to the SmpB family.

The protein localises to the cytoplasm. Functionally, required for rescue of stalled ribosomes mediated by trans-translation. Binds to transfer-messenger RNA (tmRNA), required for stable association of tmRNA with ribosomes. tmRNA and SmpB together mimic tRNA shape, replacing the anticodon stem-loop with SmpB. tmRNA is encoded by the ssrA gene; the 2 termini fold to resemble tRNA(Ala) and it encodes a 'tag peptide', a short internal open reading frame. During trans-translation Ala-aminoacylated tmRNA acts like a tRNA, entering the A-site of stalled ribosomes, displacing the stalled mRNA. The ribosome then switches to translate the ORF on the tmRNA; the nascent peptide is terminated with the 'tag peptide' encoded by the tmRNA and targeted for degradation. The ribosome is freed to recommence translation, which seems to be the essential function of trans-translation. The sequence is that of SsrA-binding protein from Paraburkholderia xenovorans (strain LB400).